The sequence spans 286 residues: Putative sugar uptake protein lin0215 (286 aa).

8 helical membrane passes run 4–26, 33–55, 114–136, 149–167, 177–194, 207–226, 230–252, and 264–283; these read MIALIPALLWGTVPLIITKFGGS, GMTLGALTFAVIVFFFTDPVYTL, LRIILGFIALALIVGGIFLTSYA, GLITLVISSLGYVGLVVLI, AILPQAIGMVLSALIMTH, LLLIIPGMIWAAGNVAMVHA, VGVATGFSLSQLGVVISTIGGIV, and LYVIVGVVLVVLGGILIGVA.

This sequence belongs to the GRP transporter (TC 2.A.7.5) family.

The protein localises to the cell membrane. This Listeria innocua serovar 6a (strain ATCC BAA-680 / CLIP 11262) protein is Putative sugar uptake protein lin0215.